The chain runs to 297 residues: Small ribosomal subunit protein uS2 (297 aa).

The disordered stretch occupies residues 252–297 (GVPGTAFSAATAAPTSWEADGGDWAASSAAPAGESWAETQPAEAKW). The span at 256–289 (TAFSAATAAPTSWEADGGDWAASSAAPAGESWAE) shows a compositional bias: low complexity.

Belongs to the universal ribosomal protein uS2 family. In terms of assembly, component of the small ribosomal subunit. Mature ribosomes consist of a small (40S) and a large (60S) subunit. The 40S subunit contains about 33 different proteins and 1 molecule of RNA (18S). The 60S subunit contains about 49 different proteins and 3 molecules of RNA (25S, 5.8S and 5S). Interacts with rps21.

Its subcellular location is the cytoplasm. Its function is as follows. Required for the assembly and/or stability of the 40S ribosomal subunit. Required for the processing of the 20S rRNA-precursor to mature 18S rRNA in a late step of the maturation of 40S ribosomal subunits. This is Small ribosomal subunit protein uS2 (rps0) from Aspergillus fumigatus (strain CBS 144.89 / FGSC A1163 / CEA10) (Neosartorya fumigata).